We begin with the raw amino-acid sequence, 259 residues long: Protein unc-50 homolog (259 aa).

Polar residues predominate over residues 1 to 15 (MLPTSSPQIHRNGSL). Residues 1–22 (MLPTSSPQIHRNGSLSERDAAR) are disordered. At 1–80 (MLPTSSPQIH…TKDQWARDDP (80 aa)) the chain is on the cytoplasmic side. A helical transmembrane segment spans residues 81–101 (AFLVLLSIWLCVSTVGFGLVL). Over 102–110 (DMGFVETLT) the chain is Lumenal. Residues 111–131 (LLLWVVFIDCIGVGLLISTLM) traverse the membrane as a helical segment. Topologically, residues 132–162 (WFVTNKYLMKHPNRDYDVEWGYAFDVHLNAF) are cytoplasmic. Residues 163 to 183 (YPLLVILHFLQLFFINHVVVI) traverse the membrane as a helical segment. Topologically, residues 184 to 198 (SSDWFLGYFVGNTMW) are lumenal. A helical transmembrane segment spans residues 199 to 219 (LIAIGYYVYITFLGYSALPFL). At 220 to 222 (KNT) the chain is on the cytoplasmic side. Residues 223–243 (VVLLYPFALLGLLYVLSISLG) form a helical membrane-spanning segment. At 244–259 (WNFTKGLCWFYKHRVQ) the chain is on the lumenal side.

The protein belongs to the unc-50 family.

The protein localises to the nucleus inner membrane. Its subcellular location is the golgi apparatus membrane. In terms of biological role, involved in the cell surface expression of neuronal nicotinic receptors. Binds RNA. In Danio rerio (Zebrafish), this protein is Protein unc-50 homolog (unc50).